Consider the following 98-residue polypeptide: Sarcosine oxidase subunit delta (98 aa).

Positions 6, 9, 59, and 63 each coordinate Zn(2+).

The protein belongs to the SoxD family. In terms of assembly, heterotetramer composed of subunits alpha (SoxA), beta (SoxB), gamma (SoxG) and delta (SoxD).

Its subcellular location is the cytoplasm. It catalyses the reaction sarcosine + (6S)-5,6,7,8-tetrahydrofolate + O2 = (6R)-5,10-methylene-5,6,7,8-tetrahydrofolate + glycine + H2O2. The enzyme catalyses sarcosine + O2 + H2O = formaldehyde + glycine + H2O2. In terms of biological role, in the presence of tetrahydrofolate, catalyzes the oxidative demethylation of sarcosine to yield glycine, 5,10-methylenetetrahydrofolate and hydrogen peroxide. In the absence of tetrahydrofolate, catalyzes the oxidative demethylation of sarcosine to yield glycine, formaldehyde and hydrogen peroxide. This Corynebacterium sp. (strain P-1) protein is Sarcosine oxidase subunit delta.